The following is a 968-amino-acid chain: Alanine--tRNA ligase, cytoplasmic (968 aa).

ATP contacts are provided by residues arginine 77, histidine 95, tryptophan 176, and 214-216 (IWN). 2 residues coordinate L-alanine: asparagine 216 and aspartate 239. Position 243 (glycine 243) interacts with ATP. 4 residues coordinate Zn(2+): histidine 606, histidine 610, cysteine 724, and histidine 728.

It belongs to the class-II aminoacyl-tRNA synthetase family. As to quaternary structure, monomer. Zn(2+) serves as cofactor.

Its subcellular location is the cytoplasm. It catalyses the reaction tRNA(Ala) + L-alanine + ATP = L-alanyl-tRNA(Ala) + AMP + diphosphate. Functionally, catalyzes the attachment of alanine to tRNA(Ala) in a two-step reaction: alanine is first activated by ATP to form Ala-AMP and then transferred to the acceptor end of tRNA(Ala). Also edits incorrectly charged tRNA(Ala) via its editing domain. The sequence is that of Alanine--tRNA ligase, cytoplasmic from Caenorhabditis elegans.